We begin with the raw amino-acid sequence, 301 residues long: tRNA pseudouridine synthase B (301 aa).

Asp-48 functions as the Nucleophile in the catalytic mechanism.

It belongs to the pseudouridine synthase TruB family. Type 1 subfamily.

The enzyme catalyses uridine(55) in tRNA = pseudouridine(55) in tRNA. Responsible for synthesis of pseudouridine from uracil-55 in the psi GC loop of transfer RNAs. In Mycobacterium ulcerans (strain Agy99), this protein is tRNA pseudouridine synthase B.